The chain runs to 175 residues: Protein FanH (175 aa).

An N-terminal signal peptide occupies residues 1–20 (MIKKVPVLLFFMASISITHA). The cysteines at positions 39 and 77 are disulfide-linked.

It is found in the fimbrium. Its function is as follows. Involved in the biosynthesis of K99 fimbriae. In Escherichia coli, this protein is Protein FanH (fanH).